A 307-amino-acid polypeptide reads, in one-letter code: Fe-S cluster assembly protein dre2 (307 aa).

2 disordered regions span residues methionine 1–serine 26 and lysine 159–valine 179. Residues alanine 15–serine 26 show a composition bias toward low complexity. An N-terminal SAM-like domain region spans residues proline 23 to valine 152. Residues proline 153–leucine 197 are linker. Positions 207, 219, 222, and 224 each coordinate [2Fe-2S] cluster. The interval cysteine 207–cysteine 224 is fe-S binding site A. [4Fe-4S] cluster is bound by residues cysteine 270, cysteine 273, cysteine 281, and cysteine 284. 2 short sequence motifs (cx2C motif) span residues cysteine 270–cysteine 273 and cysteine 281–cysteine 284. The fe-S binding site B stretch occupies residues cysteine 270–cysteine 284.

This sequence belongs to the anamorsin family. Monomer. Interacts with tah18. Interacts with mia40. Requires [2Fe-2S] cluster as cofactor. It depends on [4Fe-4S] cluster as a cofactor.

Its subcellular location is the cytoplasm. It localises to the mitochondrion intermembrane space. Component of the cytosolic iron-sulfur (Fe-S) protein assembly (CIA) machinery required for the maturation of extramitochondrial Fe-S proteins. Part of an electron transfer chain functioning in an early step of cytosolic Fe-S biogenesis, facilitating the de novo assembly of a [4Fe-4S] cluster on the scaffold complex cfd1-nbp35. Electrons are transferred to dre2 from NADPH via the FAD- and FMN-containing protein tah18. Tah18-dre2 are also required for the assembly of the diferric tyrosyl radical cofactor of ribonucleotide reductase (RNR), probably by providing electrons for reduction during radical cofactor maturation in the catalytic small subunit rnr2. The chain is Fe-S cluster assembly protein dre2 from Aspergillus terreus (strain NIH 2624 / FGSC A1156).